Here is a 211-residue protein sequence, read N- to C-terminus: tRNA (guanine-N(7)-)-methyltransferase (211 aa).

The S-adenosyl-L-methionine site is built by Asp-40, Glu-65, Asn-92, and Asp-117. Residue Asp-117 is part of the active site. Residue Lys-121 coordinates substrate. An interaction with RNA region spans residues 123-128; sequence RHNKRR. Asp-153 is a binding site for substrate.

It belongs to the class I-like SAM-binding methyltransferase superfamily. TrmB family.

The catalysed reaction is guanosine(46) in tRNA + S-adenosyl-L-methionine = N(7)-methylguanosine(46) in tRNA + S-adenosyl-L-homocysteine. It participates in tRNA modification; N(7)-methylguanine-tRNA biosynthesis. Functionally, catalyzes the formation of N(7)-methylguanine at position 46 (m7G46) in tRNA. This is tRNA (guanine-N(7)-)-methyltransferase from Synechocystis sp. (strain ATCC 27184 / PCC 6803 / Kazusa).